The following is a 334-amino-acid chain: UDP-N-acetylglucosamine--N-acetylmuramyl-(pentapeptide) pyrophosphoryl-undecaprenol N-acetylglucosamine transferase (334 aa).

UDP-N-acetyl-alpha-D-glucosamine contacts are provided by residues 11–13 (TGG), N125, S185, I229, and Q274.

The protein belongs to the glycosyltransferase 28 family. MurG subfamily.

It localises to the cell inner membrane. It carries out the reaction di-trans,octa-cis-undecaprenyl diphospho-N-acetyl-alpha-D-muramoyl-L-alanyl-D-glutamyl-meso-2,6-diaminopimeloyl-D-alanyl-D-alanine + UDP-N-acetyl-alpha-D-glucosamine = di-trans,octa-cis-undecaprenyl diphospho-[N-acetyl-alpha-D-glucosaminyl-(1-&gt;4)]-N-acetyl-alpha-D-muramoyl-L-alanyl-D-glutamyl-meso-2,6-diaminopimeloyl-D-alanyl-D-alanine + UDP + H(+). Its pathway is cell wall biogenesis; peptidoglycan biosynthesis. Cell wall formation. Catalyzes the transfer of a GlcNAc subunit on undecaprenyl-pyrophosphoryl-MurNAc-pentapeptide (lipid intermediate I) to form undecaprenyl-pyrophosphoryl-MurNAc-(pentapeptide)GlcNAc (lipid intermediate II). The sequence is that of UDP-N-acetylglucosamine--N-acetylmuramyl-(pentapeptide) pyrophosphoryl-undecaprenol N-acetylglucosamine transferase from Thermosipho africanus (strain TCF52B).